The chain runs to 195 residues: Probable GTP-binding protein EngB (195 aa).

The EngB-type G domain maps to 22-195 (GRPEVALAGR…WAALLPFLTE (174 aa)). Residues 30 to 37 (GRSNVGKS), 57 to 61 (GKTQT), 75 to 78 (DVPG), 142 to 145 (TKAD), and 174 to 176 (FSS) each bind GTP. 2 residues coordinate Mg(2+): Ser37 and Thr59.

This sequence belongs to the TRAFAC class TrmE-Era-EngA-EngB-Septin-like GTPase superfamily. EngB GTPase family. Mg(2+) is required as a cofactor.

Its function is as follows. Necessary for normal cell division and for the maintenance of normal septation. In Geobacillus thermodenitrificans (strain NG80-2), this protein is Probable GTP-binding protein EngB.